The following is a 541-amino-acid chain: Threonine--tRNA ligase catalytic subunit (541 aa).

Residues 135–429 (DHRIIGERMD…LLEHFRGKLP (295 aa)) form a catalytic region. 3 residues coordinate Zn(2+): C227, H278, and H406.

This sequence belongs to the class-II aminoacyl-tRNA synthetase family. In terms of assembly, homodimer. Probably interacts with its editing subunit. Zn(2+) serves as cofactor.

The protein resides in the cytoplasm. The enzyme catalyses tRNA(Thr) + L-threonine + ATP = L-threonyl-tRNA(Thr) + AMP + diphosphate + H(+). Catalyzes the attachment of threonine to tRNA(Thr) in a two-step reaction: L-threonine is first activated by ATP to form Thr-AMP and then transferred to the acceptor end of tRNA(Thr). Also activates L-serine and transfers it to tRNA(Thr) but cannot deacylate incorrectly charged amino acid; unlike most archaea the editing function is found in a freestanding protein. The protein is Threonine--tRNA ligase catalytic subunit of Metallosphaera sedula (strain ATCC 51363 / DSM 5348 / JCM 9185 / NBRC 15509 / TH2).